A 1336-amino-acid polypeptide reads, in one-letter code: Cytokinesis protein sepH (1336 aa).

Positions M1 to E10 are enriched in low complexity. Positions M1–V46 are disordered. The span at K36–V46 shows a compositional bias: basic and acidic residues. Positions Y59–I309 constitute a Protein kinase domain. ATP-binding positions include L65–V73 and K88. The active-site Proton acceptor is D181. The tract at residues S368–D402 is disordered. Positions H384–D393 are enriched in basic and acidic residues. Residues A654–E682 are a coiled coil. Over residues E1194–K1205 the composition is skewed to basic and acidic residues. The tract at residues E1194–S1336 is disordered. Over residues T1213–N1236 the composition is skewed to polar residues. Composition is skewed to low complexity over residues P1253–P1264 and P1272–S1285. Basic residues predominate over residues S1315–P1327.

It belongs to the protein kinase superfamily. Ser/Thr protein kinase family. CDC7 subfamily. Mg(2+) is required as a cofactor.

It catalyses the reaction L-seryl-[protein] + ATP = O-phospho-L-seryl-[protein] + ADP + H(+). It carries out the reaction L-threonyl-[protein] + ATP = O-phospho-L-threonyl-[protein] + ADP + H(+). Functionally, required for early events during cytokinesis including localization of cytoskeletal components to the cytokinetic ring. The chain is Cytokinesis protein sepH from Aspergillus niger (strain ATCC MYA-4892 / CBS 513.88 / FGSC A1513).